The primary structure comprises 306 residues: Putative type I specificity subunit S.MpnORF285P (306 aa).

Belongs to the type-I restriction system S methylase family. The methyltransferase is composed of M and S polypeptides.

Its function is as follows. The specificity (S) subunit of a type I methyltransferase (MTase); this subunit dictates DNA sequence specificity. The single R subunit has multiple frameshifts and is probably not expressed. This is Putative type I specificity subunit S.MpnORF285P from Mycoplasma pneumoniae (strain ATCC 29342 / M129 / Subtype 1) (Mycoplasmoides pneumoniae).